Here is a 94-residue protein sequence, read N- to C-terminus: Citrate lyase acyl carrier protein (94 aa).

At serine 14 the chain carries O-(phosphoribosyl dephospho-coenzyme A)serine.

It belongs to the CitD family. Oligomer with a subunit composition of (alpha,beta,gamma)6.

It localises to the cytoplasm. In terms of biological role, covalent carrier of the coenzyme of citrate lyase. This is Citrate lyase acyl carrier protein from Halothermothrix orenii (strain H 168 / OCM 544 / DSM 9562).